The sequence spans 360 residues: DNA integrity scanning protein DisA (360 aa).

The 139-residue stretch at 11 to 149 (ELDLSSILQF…ENMKYTLKDI (139 aa)) folds into the DAC domain. ATP-binding positions include Gly-78, Leu-96, and 109–113 (MRHRT).

This sequence belongs to the DisA family. In terms of assembly, homooligomer. Interacts with RadA. It depends on Mg(2+) as a cofactor.

The protein localises to the cytoplasm. It carries out the reaction 2 ATP = 3',3'-c-di-AMP + 2 diphosphate. Its activity is regulated as follows. Diadenylate cyclase (DAC) activity is inhibited 2-fold by Holliday junction (HJ) DNA, further addition of RecG inhibits DAC activity 11-fold; RecG may relocate DisA from the HJ. DAC is inhibited by the interaction with RadA. Diadenylate cyclase activity is not affected by ssDNA or dsDNA, but three- and four-way junctions strongly inhibit the activity of DisA, suggesting the enzyme is regulated by branched nucleic acids. In terms of biological role, participates in a DNA-damage check-point that is active prior to asymmetric division when DNA is damaged. Forms globular foci that rapidly scan along the chromosomes during sporulation, searching for lesions. Its ability to scan through the chromosome rapidly is due to its non-specific DNA-binding. When a lesion is present, DisA pauses at the lesion site. This triggers a cellular response that culminates in a temporary block in sporulation initiation. It is required, at least partially, to inhibit the activity of the transcription factor spo0A, which controls, among others, early sporulation genes. In B.subtilis c-di-AMP is a second messenger that mediates growth, DNA repair and cell wall homeostasis; it is toxic when present in excess. Limits the replication fork reggression activity of RecG; DisA inhibits the ATPase activity of RecG. By limiting RecG-mediated fork regression, DisA provides time for removal of potentially lethal DNA lesions. Its function is as follows. One of 3 paralogous diadenylate cyclases (DAC) in this bacteria. Has diadenylate cyclase activity, catalyzing the condensation of 2 ATP molecules into cyclic di-AMP (c-di-AMP). c-di-AMP acts as a signaling molecule that couples DNA integrity with progression of sporulation. The rise in c-di-AMP level generated by DisA while scanning the chromosome operates as a positive signal that advances sporulation; upon encountering a lesion, the DisA focus arrests at the damaged site and halts c-di-AMP synthesis. Does not convert GTP to c-di-GMP. In Bacillus subtilis (strain 168), this protein is DNA integrity scanning protein DisA.